Reading from the N-terminus, the 330-residue chain is Cathepsin K (330 aa).

Residues 1–16 (MWGLKVVLLLPVMSSA) form the signal peptide. The propeptide at 17-115 (LYPEEILDTQ…TLYIPDWEGR (99 aa)) is activation peptide. The N-linked (GlcNAc...) asparagine glycan is linked to asparagine 104. Disulfide bonds link cysteine 137–cysteine 178, cysteine 171–cysteine 211, and cysteine 270–cysteine 319. Cysteine 140 is an active-site residue. Residues histidine 277 and asparagine 297 contribute to the active site.

It belongs to the peptidase C1 family. Expressed in the thyroid epithelial cells.

The protein localises to the lysosome. It is found in the secreted. The protein resides in the apical cell membrane. The enzyme catalyses Broad proteolytic activity. With small-molecule substrates and inhibitors, the major determinant of specificity is P2, which is preferably Leu, Met &gt; Phe, and not Arg.. In terms of biological role, thiol protease involved in osteoclastic bone resorption and may participate partially in the disorder of bone remodeling. Displays potent endoprotease activity against fibrinogen at acid pH. May play an important role in extracellular matrix degradation. Involved in the release of thyroid hormone thyroxine (T4) by limited proteolysis of TG/thyroglobulin in the thyroid follicle lumen. In Sus scrofa (Pig), this protein is Cathepsin K (CTSK).